The chain runs to 103 residues: Large ribosomal subunit protein bL21 (103 aa).

Belongs to the bacterial ribosomal protein bL21 family. Part of the 50S ribosomal subunit. Contacts protein L20.

Functionally, this protein binds to 23S rRNA in the presence of protein L20. The polypeptide is Large ribosomal subunit protein bL21 (Salmonella schwarzengrund (strain CVM19633)).